The primary structure comprises 475 residues: Ribulose bisphosphate carboxylase large chain (475 aa).

Residues 1-2 (MS) constitute a propeptide that is removed on maturation. Proline 3 bears the N-acetylproline mark. Residue lysine 14 is modified to N6,N6,N6-trimethyllysine. 2 residues coordinate substrate: asparagine 123 and threonine 173. Catalysis depends on lysine 175, which acts as the Proton acceptor. Residue lysine 177 coordinates substrate. 3 residues coordinate Mg(2+): lysine 201, aspartate 203, and glutamate 204. At lysine 201 the chain carries N6-carboxylysine. Histidine 294 functions as the Proton acceptor in the catalytic mechanism. 3 residues coordinate substrate: arginine 295, histidine 327, and serine 379.

It belongs to the RuBisCO large chain family. Type I subfamily. In terms of assembly, heterohexadecamer of 8 large chains and 8 small chains; disulfide-linked. The disulfide link is formed within the large subunit homodimers. Requires Mg(2+) as cofactor. Post-translationally, the disulfide bond which can form in the large chain dimeric partners within the hexadecamer appears to be associated with oxidative stress and protein turnover.

It is found in the plastid. Its subcellular location is the chloroplast. It catalyses the reaction 2 (2R)-3-phosphoglycerate + 2 H(+) = D-ribulose 1,5-bisphosphate + CO2 + H2O. The catalysed reaction is D-ribulose 1,5-bisphosphate + O2 = 2-phosphoglycolate + (2R)-3-phosphoglycerate + 2 H(+). Functionally, ruBisCO catalyzes two reactions: the carboxylation of D-ribulose 1,5-bisphosphate, the primary event in carbon dioxide fixation, as well as the oxidative fragmentation of the pentose substrate in the photorespiration process. Both reactions occur simultaneously and in competition at the same active site. This Amaranthus tricolor (Joseph's coat) protein is Ribulose bisphosphate carboxylase large chain.